Consider the following 882-residue polypeptide: Alanine--tRNA ligase (882 aa).

Positions 574, 578, 682, and 686 each coordinate Zn(2+). Positions 853–882 are disordered; that stretch reads GGRGGGKGALAQGGGLDPRKAREALPGLLP. A compositionally biased stretch (gly residues) spans 854 to 868; the sequence is GRGGGKGALAQGGGL.

Belongs to the class-II aminoacyl-tRNA synthetase family. Zn(2+) is required as a cofactor.

The protein resides in the cytoplasm. It catalyses the reaction tRNA(Ala) + L-alanine + ATP = L-alanyl-tRNA(Ala) + AMP + diphosphate. In terms of biological role, catalyzes the attachment of alanine to tRNA(Ala) in a two-step reaction: alanine is first activated by ATP to form Ala-AMP and then transferred to the acceptor end of tRNA(Ala). Also edits incorrectly charged Ser-tRNA(Ala) and Gly-tRNA(Ala) via its editing domain. This chain is Alanine--tRNA ligase, found in Thermus thermophilus (strain ATCC 27634 / DSM 579 / HB8).